The chain runs to 323 residues: Ubiquinone biosynthesis protein COQ4, mitochondrial (323 aa).

The N-terminal 29 residues, 1–29 (MLKSTVSNTRIKCCRIDQRRNYLFTALAS), are a transit peptide targeting the mitochondrion. Zn(2+) contacts are provided by histidine 205, aspartate 206, histidine 209, and glutamate 221.

This sequence belongs to the COQ4 family. In terms of assembly, component of a multi-subunit COQ enzyme complex, composed of at least COQ3, COQ4, COQ5, COQ6, COQ7 and COQ9. Zn(2+) serves as cofactor.

It is found in the mitochondrion inner membrane. It carries out the reaction a 4-hydroxy-3-methoxy-5-(all-trans-polyprenyl)benzoate + H(+) = a 2-methoxy-6-(all-trans-polyprenyl)phenol + CO2. It participates in cofactor biosynthesis; ubiquinone biosynthesis. In terms of biological role, lyase that catalyzes the C1-decarboxylation of 4-hydroxy-3-methoxy-5-(all-trans-polyprenyl)benzoic acid into 2-methoxy-6-(all-trans-polyprenyl)phenol during ubiquinone biosynthesis. The polypeptide is Ubiquinone biosynthesis protein COQ4, mitochondrial (Candida dubliniensis (strain CD36 / ATCC MYA-646 / CBS 7987 / NCPF 3949 / NRRL Y-17841) (Yeast)).